The sequence spans 370 residues: Leucine-rich repeat and transmembrane domain-containing protein 2 (370 aa).

The signal sequence occupies residues 1–35 (MLAPGSSPGQRGRLALQWRQVSWITCWIALYAVEA). Residues 36 to 68 (LPTCPFSCKCDSRSLEVDCSGLGLTTVPPDVPA) enclose the LRRNT domain. The Extracellular segment spans residues 36–310 (LPTCPFSCKC…PASVRRAMGT (275 aa)). LRR repeat units follow at residues 69–90 (ATRTLLLLNNKLSALPSWAFAN), 93–114 (SLQRLDLSNNFLDRLPRSIFGD), 117–139 (NLTELQLRNNSIRTLDRDLLRHS), 141–162 (LLRHLDLSINGLAQLPPGLFDG), and 165–186 (ALRSLSLRSNRLQNLDRLTFEP). Asn90 is a glycosylation site (N-linked (GlcNAc...) asparagine). N-linked (GlcNAc...) asparagine glycosylation is found at Asn117 and Asn125. One can recognise an LRRCT domain in the interval 198-252 (NPWECDCNLREFKHWMEWFSYRGGRLDQLACTLPKELRGKDMRMVPMEMFNYCSQ). The N-linked (GlcNAc...) asparagine glycan is linked to Asn257. The interval 261 to 300 (GLDIPGPPCTKASPEPAKPKPGAEPEPEPSTACPQKQRHR) is disordered. The helical transmembrane segment at 311 to 331 (VIIAGVVCGVVCIMMVVAAAY) threads the bilayer. Residues 332 to 370 (GCIYASLMAKYHRELKKRQPLMGDPEGEHEDQKQISSVA) lie on the Cytoplasmic side of the membrane. The interval 351-370 (PLMGDPEGEHEDQKQISSVA) is disordered.

It is found in the membrane. This chain is Leucine-rich repeat and transmembrane domain-containing protein 2 (LRTM2), found in Homo sapiens (Human).